The following is a 330-amino-acid chain: Ribosomal RNA small subunit methyltransferase C (330 aa).

The protein belongs to the methyltransferase superfamily. RsmC family. As to quaternary structure, monomer.

It is found in the cytoplasm. The enzyme catalyses guanosine(1207) in 16S rRNA + S-adenosyl-L-methionine = N(2)-methylguanosine(1207) in 16S rRNA + S-adenosyl-L-homocysteine + H(+). In terms of biological role, specifically methylates the guanine in position 1207 of 16S rRNA in the 30S particle. The chain is Ribosomal RNA small subunit methyltransferase C from Haemophilus influenzae (strain ATCC 51907 / DSM 11121 / KW20 / Rd).